The chain runs to 76 residues: UPF0291 protein BPUM_1689 (76 aa).

Disordered stretches follow at residues 1–31 (MISK…TEQK) and 56–76 (DPEG…QNLH). 2 stretches are compositionally biased toward basic and acidic residues: residues 12 to 31 (ELSK…TEQK) and 63 to 76 (TPEK…QNLH).

The protein belongs to the UPF0291 family.

Its subcellular location is the cytoplasm. This is UPF0291 protein BPUM_1689 from Bacillus pumilus (strain SAFR-032).